The chain runs to 556 residues: PPE family protein PPE2 (556 aa).

The interval 8–164 (ASPPEVHSAL…ASYQAVSTAA (157 aa)) is PPE. Residues 201 to 256 (QKIGYTDFYNNVIQPFINWLTNLPFLQAMFSGFDPWLPSLGNPLTFLSPANIAFAL) form an SH3-like region. Residues 319-340 (LEQTLALLPAALPLLAAPLAPL) form a leucine zipper motif region. Disordered regions lie at residues 385–418 (TPTP…PPVT) and 443–556 (GTGV…TRVE). Pro residues predominate over residues 400 to 417 (PTPPLGPPPPPVTAPPPV). Residues 456–471 (AEAPASAAAPEEQVQP) show a composition bias toward low complexity. The segment covering 472–481 (QRRRRPKIKQ) has biased composition (basic residues). Residues 473 to 481 (RRRRPKIKQ) carry the Nuclear localization signal motif.

The protein belongs to the mycobacterial PPE family.

It localises to the secreted. The protein localises to the host cytoplasm. It is found in the host nucleus. In terms of biological role, inhibits nitric oxide (NO) production in activated macrophages. Acts by inhibiting expression of the host inducible nitric oxide synthase (iNOS). PPE2 is translocated into the host macrophage nucleus, where it interacts with a GATA-binding site overlapping with the TATA box of NOS2 (iNOS) promoter, and strongly inhibits NOS2 gene transcription. Reduction in NO production in turn facilitates intracellular survival of the bacilli inside the macrophage. In addition, disrupts the assembly of NADPH oxidase complex, which inhibits NADPH oxidase-mediated reactive oxygen species (ROS) generation in macrophages and favors M.tuberculosis survival. Acts by interacting with NCF2, the cytosolic subunit of NADPH oxidase, and preventing translocation of NCF2 and NCF1 to the membrane, which causes a reduction of the functional assembly of NADPH oxidase complex and a decrease in NADPH oxidase activity. The chain is PPE family protein PPE2 (PPE2) from Mycobacterium tuberculosis (strain CDC 1551 / Oshkosh).